Reading from the N-terminus, the 384-residue chain is MMCGFTSNPSPKKLLSKSSATNVHLEISPVKPDRPCKGYENVLGSCTTVAKCADLTDDLPVHNKENLLHGFNDLERHHDEENSSLQDSGYSSILQNDSPCQDETDSNVSDIQVRDTPKNLMQYQKPFHTLSTRCLPILRFEAAMCSTLKKMRKTSKKIDWNAVDDVVCGGNYGLEHLIGKSMGLERVDILAELFHRDFKHLLTKILRHLNAMDLINVIGVSTTWRKILQKDNWAYNTYKLGCKELCEKRAKVSTHTATRDESLCRVPLASVQKVAASSLCTSKKQNKNGGLSNNRHAEFIEVAQTLKNDQSLKACVDCGSPAKYDSYLHRAICTRESCKLDFCTLCSCKYHSSKSCLISKPRSYRIPIEPLPGSKKSKQNLRRL.

Disordered stretches follow at residues 1–20 (MMCG…KSSA) and 79–106 (DEEN…ETDS). Positions 9–19 (PSPKKLLSKSS) are enriched in low complexity. Over residues 83–99 (SSLQDSGYSSILQNDSP) the composition is skewed to polar residues. Residues 191–238 (AELFHRDFKHLLTKILRHLNAMDLINVIGVSTTWRKILQKDNWAYNTY) enclose the F-box domain. The segment at 311–359 (SLKACVDCGSPAKYDSYLHRAICTRESCKLDFCTLCSCKYHSSKSCLIS) adopts a ZBR-type zinc-finger fold. Residues C315, C318, C333, C338, C343, C346, H351, and C356 each contribute to the Zn(2+) site.

In terms of assembly, part of a SCF (SKP1-cullin-F-box) protein ligase complex. Interacts with btrc. Interacts with skp1. Interacts with cdc20. Interacts with pin1; stabilizes fbxo5 by preventing its association with btrc in an isomerization-dependent pathway; this interaction is present during G2 phase and prevents fbxo5 degradation. Interacts with plk1. Proteolysed; proteolysis is induced by both cyclin B-cdk1 and cyclin A-cdk1/2 complex through probable phosphorylation. Proteolysis is inhibited by pin1 during G2.

Its subcellular location is the nucleus. The protein localises to the cytoplasm. The protein resides in the cytoskeleton. It localises to the spindle. It is found in the microtubule organizing center. Its subcellular location is the centrosome. Its pathway is protein modification; protein ubiquitination. In terms of biological role, regulates progression through early mitosis by inhibiting the anaphase promoting complex/cyclosome (APC). Binds to the APC activators cdc20 to prevent APC activation. Can also bind directly to the APC to inhibit substrate-binding. Required to arrest unfertilized eggs at metaphase of meiosis II, by preventing their release from metaphase of meiosis II, through inhibition of APC-dependent cyclin B destruction leading to stabilization of cyclin B-cdk1 complex activity. This is F-box only protein 5-B (fbxo5-b) from Xenopus laevis (African clawed frog).